Consider the following 213-residue polypeptide: Eukaryotic translation initiation factor isoform 4E (213 aa).

Residues 1-37 (MATEVAAAVPPPQLDAEENSGLEAAAAEAKIQPSSGP) are disordered. MRNA contacts are provided by residues 56–61 (QGAAWG), Lys88, and 106–107 (WE). Cysteines 111 and 150 form a disulfide. Residues 157–162 (RQRQDK) and 202–205 (KRER) each bind mRNA.

It belongs to the eukaryotic initiation factor 4E family. In terms of assembly, EIF4F is a multi-subunit complex, the composition of which varies with external and internal environmental conditions. It is composed of at least EIF4A, EIF4E and EIF4G. EIF4E is also known to interact with other partners. In higher plants two isoforms of EIF4F have been identified, named isoform EIF4F and isoform EIF(iso)4F. Isoform EIF4F has subunits p220 and p26, whereas isoform EIF(iso)4F has subunits p82 and p28. As to quaternary structure, (Microbial infection) Interacts with potyvirus viral genome-linked protein (VPg) of plum pox virus (PPV) strain D both in nucleus and cytoplasm; this interaction is possible in susceptible hosts but is impaired in resistant plants. In terms of processing, according to the redox status, the Cys-111-Cys-150 disulfide bridge may have a role in regulating protein function by affecting its ability to bind capped mRNA. As to expression, mostly expressed in leaves, flower buds, leaf buds and anthers, to a lower extent in roots, stems and green immature fruit, and, at low levels, in petals.

The protein localises to the cytoplasm. It localises to the nucleus. Component of the protein complex eIF4F, which is involved in the recognition of the mRNA cap, ATP-dependent unwinding of 5'-terminal secondary structure and recruitment of mRNA to the ribosome. Recognizes and binds the 7-methylguanosine-containing mRNA cap during an early step in the initiation of protein synthesis and facilitates ribosome binding by inducing the unwinding of the mRNAs secondary structures. Key component of recessive resistance to potyviruses such as the plum pox virus (PPV) strain D. Functionally, (Microbial infection) Susceptibility host factor required for viral infection by recruiting viral RNAs to the host ribosomal complex via an interaction with viral genome-linked protein (VPg). The protein is Eukaryotic translation initiation factor isoform 4E of Prunus domestica (Garden plum).